The following is a 369-amino-acid chain: Dihydroorotate dehydrogenase (quinone) (369 aa).

Residues 76–80 (AGLDK) and Thr-100 contribute to the FMN site. Lys-80 contacts substrate. 125–129 (NRMGF) contacts substrate. Residues Asn-154 and Asn-187 each contribute to the FMN site. A substrate-binding site is contributed by Asn-187. Residue Ser-190 is the Nucleophile of the active site. Position 192 (Asn-192) interacts with substrate. FMN-binding residues include Lys-232 and Ser-260. Residue 261-262 (NT) participates in substrate binding. Residues Gly-282, Gly-311, and 332–333 (YS) contribute to the FMN site.

This sequence belongs to the dihydroorotate dehydrogenase family. Type 2 subfamily. In terms of assembly, monomer. The cofactor is FMN.

Its subcellular location is the cell membrane. It carries out the reaction (S)-dihydroorotate + a quinone = orotate + a quinol. The protein operates within pyrimidine metabolism; UMP biosynthesis via de novo pathway; orotate from (S)-dihydroorotate (quinone route): step 1/1. Its function is as follows. Catalyzes the conversion of dihydroorotate to orotate with quinone as electron acceptor. This chain is Dihydroorotate dehydrogenase (quinone) (pyrD), found in Deinococcus radiodurans (strain ATCC 13939 / DSM 20539 / JCM 16871 / CCUG 27074 / LMG 4051 / NBRC 15346 / NCIMB 9279 / VKM B-1422 / R1).